The primary structure comprises 354 residues: MSEIQLRHDWKRDEIEALFALPMNDLLFEAHSIHRQVYDPNEVQISRLLSIKTGACPEDCKYCPQSARYDTGLEKERLIEIEKVLTEARSAKAAGASRFCMGAAWRNPHARDMPYLKDMVREVKSMGMETCMTLGMLSPDQAGELAEAGLDYYNHNLDTSPEYYGDIITTRTYQDRLDTLSNVRAAGMKVCSGGIVGMGEQATDRSGLLQQLANMEQHPDSVPINMLVKVAGTPFENLEDLDPLVFVRTIAVARILMPHSRVRLSAGREKMSDEMQAMCFFAGANSIFYGCKLLTTNNPEENEDMTLFKRLGLHPEQGKYATIEDDKAVFEKATAKANAIKDKQSSAFYDAAAL.

The Radical SAM core domain occupies 41-265 (NEVQISRLLS…LMPHSRVRLS (225 aa)). Residues Cys-56, Cys-60, and Cys-63 each coordinate [4Fe-4S] cluster. 4 residues coordinate [2Fe-2S] cluster: Cys-100, Cys-131, Cys-191, and Arg-263.

This sequence belongs to the radical SAM superfamily. Biotin synthase family. Homodimer. The cofactor is [4Fe-4S] cluster. It depends on [2Fe-2S] cluster as a cofactor.

The enzyme catalyses (4R,5S)-dethiobiotin + (sulfur carrier)-SH + 2 reduced [2Fe-2S]-[ferredoxin] + 2 S-adenosyl-L-methionine = (sulfur carrier)-H + biotin + 2 5'-deoxyadenosine + 2 L-methionine + 2 oxidized [2Fe-2S]-[ferredoxin]. It participates in cofactor biosynthesis; biotin biosynthesis; biotin from 7,8-diaminononanoate: step 2/2. Catalyzes the conversion of dethiobiotin (DTB) to biotin by the insertion of a sulfur atom into dethiobiotin via a radical-based mechanism. The polypeptide is Biotin synthase (Shewanella woodyi (strain ATCC 51908 / MS32)).